Consider the following 511-residue polypeptide: Glucan endo-1,3-beta-glucosidase 1 (511 aa).

Residues 1 to 28 (MAFTSMVSTVPVLFFFFTLLLISANSSS) form the signal peptide. A glycan (N-linked (GlcNAc...) asparagine) is linked at Asn109. Glu137 functions as the Proton donor in the catalytic mechanism. Asn192 and Asn274 each carry an N-linked (GlcNAc...) asparagine glycan. Catalysis depends on Glu284, which acts as the Nucleophile. N-linked (GlcNAc...) asparagine glycans are attached at residues Asn374, Asn378, Asn407, Asn473, and Asn480. A disulfide bridge links Cys382 with Cys445. Ala485 is lipidated: GPI-anchor amidated alanine. A propeptide spans 486–511 (AGEATSRSLSRGFCVTIMILVTFSIL) (removed in mature form).

It belongs to the glycosyl hydrolase 17 family. Contains two additional disulfide bonds.

The protein localises to the cell membrane. It carries out the reaction Hydrolysis of (1-&gt;3)-beta-D-glucosidic linkages in (1-&gt;3)-beta-D-glucans.. The chain is Glucan endo-1,3-beta-glucosidase 1 from Arabidopsis thaliana (Mouse-ear cress).